Here is a 1005-residue protein sequence, read N- to C-terminus: DNA-directed RNA polymerase subunit beta (1005 aa).

This sequence belongs to the RNA polymerase beta chain family. As to quaternary structure, in plastids the minimal PEP RNA polymerase catalytic core is composed of four subunits: alpha, beta, beta', and beta''. When a (nuclear-encoded) sigma factor is associated with the core the holoenzyme is formed, which can initiate transcription (Potential).

It is found in the plastid. It localises to the apicoplast. The enzyme catalyses RNA(n) + a ribonucleoside 5'-triphosphate = RNA(n+1) + diphosphate. Its function is as follows. DNA-dependent RNA polymerase catalyzes the transcription of DNA into RNA using the four ribonucleoside triphosphates as substrates. This chain is DNA-directed RNA polymerase subunit beta (rpoB), found in Theileria parva (East coast fever infection agent).